We begin with the raw amino-acid sequence, 283 residues long: Adenosyl-chloride synthase (283 aa).

Residues aspartate 11, 70–72 (YVY), and 128–131 (TWYG) contribute to the substrate site. Residue glycine 131 participates in chloride binding.

It belongs to the SAM hydrolase / SAM-dependent halogenase family. As to quaternary structure, homotrimer.

It carries out the reaction chloride + S-adenosyl-L-methionine = 5'-chloro-5'-deoxyadenosine + L-methionine. Functionally, involved in the biosynthesis of the proteosome inhibitor salinosporamide A (SalA). Catalyzes the halogenation of S-adenosyl-L-methionine (SAM) with chloride to generate 5'-chloro-5'-deoxyadenosine (5'-CIDA) and L-methionine. It can also use bromide and iodide, producing halogenated 5'-deoxyadenosine (5'-XDA) and L-methionine, however no halogenase activity is detected in the presence of fluoride. In Salinispora tropica (strain ATCC BAA-916 / DSM 44818 / JCM 13857 / NBRC 105044 / CNB-440), this protein is Adenosyl-chloride synthase.